We begin with the raw amino-acid sequence, 423 residues long: Carboxypeptidase B2 (423 aa).

Residues methionine 1–alanine 22 form the signal peptide. A propeptide spans phenylalanine 23–arginine 114 (activation peptide). Asparagine 44, asparagine 73, asparagine 85, and asparagine 108 each carry an N-linked (GlcNAc...) asparagine glycan. One can recognise a Peptidase M14 domain in the interval glutamine 122–valine 419. A disulfide bridge links cysteine 178 with cysteine 191. Zn(2+) is bound by residues histidine 181 and glutamate 184. Substrate-binding positions include histidine 181–glutamate 184 and arginine 239. An N-linked (GlcNAc...) asparagine glycan is attached at asparagine 241. 2 disulfide bridges follow: cysteine 250-cysteine 274 and cysteine 265-cysteine 279. Asparagine 256 to arginine 257 is a substrate binding site. Histidine 310 provides a ligand contact to Zn(2+). Residues serine 311–tyrosine 312 and tyrosine 363 contribute to the substrate site. Glutamate 385 functions as the Proton donor/acceptor in the catalytic mechanism.

Belongs to the peptidase M14 family. Zn(2+) serves as cofactor.

The protein localises to the secreted. It catalyses the reaction Release of C-terminal Arg and Lys from a polypeptide.. With respect to regulation, TAFI/CPB2 is unique among carboxypeptidases in that it spontaneously inactivates with a short half-life, a property that is crucial for its role in controlling blood clot lysis. The zymogen is stabilized by interactions with the activation peptide. Release of the activation peptide increases a dynamic flap mobility and in time this leads to conformational changes that disrupt the catalytic site and expose a cryptic thrombin-cleavage site present at Arg-324. In terms of biological role, cleaves C-terminal arginine or lysine residues from biologically active peptides such as kinins or anaphylatoxins in the circulation thereby regulating their activities. Down-regulates fibrinolysis by removing C-terminal lysine residues from fibrin that has already been partially degraded by plasmin. The polypeptide is Carboxypeptidase B2 (CPB2) (Bos taurus (Bovine)).